Consider the following 269-residue polypeptide: Putative pyruvate, phosphate dikinase regulatory protein (269 aa).

147–154 (GVSRSSKT) provides a ligand contact to ADP.

Belongs to the pyruvate, phosphate/water dikinase regulatory protein family. PDRP subfamily.

The enzyme catalyses N(tele)-phospho-L-histidyl/L-threonyl-[pyruvate, phosphate dikinase] + ADP = N(tele)-phospho-L-histidyl/O-phospho-L-threonyl-[pyruvate, phosphate dikinase] + AMP + H(+). It carries out the reaction N(tele)-phospho-L-histidyl/O-phospho-L-threonyl-[pyruvate, phosphate dikinase] + phosphate + H(+) = N(tele)-phospho-L-histidyl/L-threonyl-[pyruvate, phosphate dikinase] + diphosphate. Bifunctional serine/threonine kinase and phosphorylase involved in the regulation of the pyruvate, phosphate dikinase (PPDK) by catalyzing its phosphorylation/dephosphorylation. The sequence is that of Putative pyruvate, phosphate dikinase regulatory protein from Trichlorobacter lovleyi (strain ATCC BAA-1151 / DSM 17278 / SZ) (Geobacter lovleyi).